Here is a 375-residue protein sequence, read N- to C-terminus: ELAV-like protein 2 (375 aa).

3 RRM domains span residues 67–145 (TNLI…YARP), 153–233 (ANLY…FANN), and 292–370 (WCIF…FKTS).

Belongs to the RRM elav family. As to quaternary structure, part of a ribonucleoprotein (RNP) complex, at least composed of elavl1/elrA and/or elavl2/elrB, igf2bp3/vg1RBP, ddx6/Xp54, ybx2/frgy2, lsm14b/rap55b and, in a subset of RNP complexes, stau1/staufen. Binds RNA as a homooligomer.

Its subcellular location is the cytoplasm. It localises to the cell cortex. In terms of biological role, binds to poly-U elements and AU-rich elements (AREs) in the 3'-UTR of target mRNAs. Required for the vegetal localization of vg1 mRNA. Probably required for nervous system development. The sequence is that of ELAV-like protein 2 from Xenopus tropicalis (Western clawed frog).